The chain runs to 1085 residues: SLIT-ROBO Rho GTPase-activating protein 1 (1085 aa).

The F-BAR domain occupies 19 to 314 (SQVKEIRAQL…AVDNLEPRSD (296 aa)). Residues 351–390 (VQAELMLRYQQLQSRLATLKIENEEVKKTTEATLQTIQDM) are a coiled coil. At S416 the chain carries Phosphoserine. The tract at residues 475-496 (YMTTRPPNVPPKPQKHRKSRPR) is disordered. The Rho-GAP domain maps to 506–694 (GDLETFVKDS…TIIIHHETIF (189 aa)). The region spanning 743 to 802 (CEPIEAIAKFDYVGRSARELSFKKGASLLLYHRASEDWWEGRHNGIDGLVPHQYIVVQDM) is the SH3 domain. Polar residues predominate over residues 808–822 (DTLSQKADSEASSGP). Positions 808–954 (DTLSQKADSE…TGFNDHKPLD (147 aa)) are disordered. Residues S835 and S917 each carry the phosphoserine modification. Positions 922 to 931 (SRHDSLKKID) are enriched in basic and acidic residues. S932 carries the post-translational modification Phosphoserine. Residues 937 to 946 (RSTSSGQYTG) are compositionally biased toward polar residues. Positions 956–985 (ETIAQDIEETMNTALNELRELERQSTAKHA) form a coiled coil. Polar residues predominate over residues 997–1011 (KNSPTPATSTESLSP). Disordered regions lie at residues 997-1038 (KNSP…MSTF) and 1051-1085 (KPPA…SCTM). S999 is subject to Phosphoserine. At T1001 the chain carries Phosphothreonine. Positions 1027 to 1037 (STSSSSDTMST) are enriched in low complexity. Residue S1032 is modified to Phosphoserine.

Homodimer. Forms a heterooligomer with SRGAP2 and SRGAP3 through its F-BAR domain. Interacts with ROBO1, CDC42 and RHOA. Interacts with FASLG. In terms of tissue distribution, expressed in brain, lung, kidney, and testis.

In terms of biological role, GTPase-activating protein for RhoA and Cdc42 small GTPases. Together with CDC42 seems to be involved in the pathway mediating the repulsive signaling of Robo and Slit proteins in neuronal migration. SLIT2, probably through interaction with ROBO1, increases the interaction of SRGAP1 with ROBO1 and inactivates CDC42. This chain is SLIT-ROBO Rho GTPase-activating protein 1 (SRGAP1), found in Homo sapiens (Human).